The primary structure comprises 618 residues: MEKVFYVTTPIYYVNAEPHLGHAYTTVVADFLARWHRLDGYRTFFLTGTDEHGETVYRAAQAAGEDPKAFVDRVSGRFKRAWDLLGIAYDDFIRTTEERHKKVVQLVLKKVYEAGDIYYGEYEGLYCVSCERFYTEKELVEGLCPIHGRPVERRKEGNYFFRMEKYRPWLQEYIQENPDLIRPEGYRNEVLAMLAEPIGDLSISRPKSRVPWGIPLPWDENHVTYVWFDALLNYVSALDYPEGEAYRTFWPHAWHLIGKDILKPHAVFWPTMLKAAGIPMYRHLNVGGFLLGPDGRKMSKTLGNVVDPFALLEKYGRDALRYYLLREIPYGQDTPVSEEALRTRYEADLADDLGNLVQRTRAMLFRFAEGRIPEPVAGEELAEGTGLAGRLRPLVRELKFHVALEEAMAYVKALNRYINEKKPWELFKKEPEEARAVLYRVVEGLRIASILLTPAMPDKMAELRRALGLKEEVRLEEAERWGLAEPRPIPEEAPVLFPKKEAKVEAKPKEEAWIGIEDFAKVELRVAEVLAAEKHPNADRLLVLRLSLGNEERTVVSGIAKWYRPEELVGKKVVLVANLKPAKLRGIESQGMILAAQEGEALALVTVEGEVPPGAVVK.

The short motif at 12-22 (YYVNAEPHLGH) is the 'HIGH' region element. Residues C127, C130, C144, and H147 each contribute to the Zn(2+) site. The 'KMSKS' region signature appears at 297 to 301 (KMSKT). K300 contributes to the ATP binding site. In terms of domain architecture, tRNA-binding spans 518–618 (DFAKVELRVA…GEVPPGAVVK (101 aa)).

The protein belongs to the class-I aminoacyl-tRNA synthetase family. MetG type 2A subfamily. In terms of assembly, homodimer. Zn(2+) is required as a cofactor.

The protein localises to the cytoplasm. It catalyses the reaction tRNA(Met) + L-methionine + ATP = L-methionyl-tRNA(Met) + AMP + diphosphate. Its function is as follows. Is required not only for elongation of protein synthesis but also for the initiation of all mRNA translation through initiator tRNA(fMet) aminoacylation. This is Methionine--tRNA ligase (metG) from Thermus thermophilus (strain ATCC 27634 / DSM 579 / HB8).